We begin with the raw amino-acid sequence, 341 residues long: Glycerol-3-phosphate dehydrogenase [NAD(P)+] (341 aa).

The NADPH site is built by S15, W16, R36, and K110. Sn-glycerol 3-phosphate-binding residues include K110, G139, and S141. An NADPH-binding site is contributed by A143. Residues K194, D247, S257, R258, and N259 each coordinate sn-glycerol 3-phosphate. Residue K194 is the Proton acceptor of the active site. R258 provides a ligand contact to NADPH. The NADPH site is built by V282 and E284.

This sequence belongs to the NAD-dependent glycerol-3-phosphate dehydrogenase family.

It localises to the cytoplasm. It catalyses the reaction sn-glycerol 3-phosphate + NAD(+) = dihydroxyacetone phosphate + NADH + H(+). The catalysed reaction is sn-glycerol 3-phosphate + NADP(+) = dihydroxyacetone phosphate + NADPH + H(+). It participates in membrane lipid metabolism; glycerophospholipid metabolism. In terms of biological role, catalyzes the reduction of the glycolytic intermediate dihydroxyacetone phosphate (DHAP) to sn-glycerol 3-phosphate (G3P), the key precursor for phospholipid synthesis. This Xanthomonas campestris pv. campestris (strain 8004) protein is Glycerol-3-phosphate dehydrogenase [NAD(P)+].